We begin with the raw amino-acid sequence, 299 residues long: Recombination-associated protein RdgC (299 aa).

It belongs to the RdgC family.

It localises to the cytoplasm. Its subcellular location is the nucleoid. May be involved in recombination. The polypeptide is Recombination-associated protein RdgC (Bordetella parapertussis (strain 12822 / ATCC BAA-587 / NCTC 13253)).